The sequence spans 357 residues: Glutamine synthetase root isozyme 1 (357 aa).

A GS beta-grasp domain is found at 19 to 99 (IIAEYIWIGG…VMCDCYTPQG (81 aa)). Positions 106–357 (KRYSAAKVFS…AETTILWNGN (252 aa)) constitute a GS catalytic domain.

Belongs to the glutamine synthetase family. In terms of assembly, homooctamer. In terms of tissue distribution, found mainly in the cortical tissues of seedling roots, and in the root tip.

The protein localises to the cytoplasm. It catalyses the reaction L-glutamate + NH4(+) + ATP = L-glutamine + ADP + phosphate + H(+). Plays a role in the flow of nitrogen into nitrogenous organic compounds. This Zea mays (Maize) protein is Glutamine synthetase root isozyme 1 (GLN6).